The sequence spans 454 residues: Butyrophilin-like protein 2 (454 aa).

Topologically, residues 1–6 are cytoplasmic; that stretch reads MVDCPR. Residues 7 to 23 traverse the membrane as a helical; Signal-anchor for type II membrane protein segment; sequence YSLSGVAASFLFVLLTI. Topologically, residues 24 to 454 are extracellular; sequence KHPDDFRVVG…KTARFPLSGW (431 aa). 4 Ig-like V-type domains span residues 27 to 140, 148 to 234, 244 to 355, and 365 to 452; these read DDFR…VLLQ, PNIH…ATIA, ASVS…ARVD, and PRIT…FPLS. 4 disulfides stabilise this stretch: Cys50–Cys124, Cys164–Cys218, Cys267–Cys341, and Cys381–Cys435. N-linked (GlcNAc...) asparagine glycans are attached at residues Asn210, Asn296, Asn427, and Asn432.

Belongs to the immunoglobulin superfamily. BTN/MOG family. In terms of tissue distribution, highly expressed in intestine and at reduced levels in lung and stomach. Also expressed in thymus, spleen, lymph nodes, T-cells, B-cells, and macrophages.

The protein resides in the membrane. Functionally, negative regulator of T-cell proliferation. The protein is Butyrophilin-like protein 2 of Mus musculus (Mouse).